We begin with the raw amino-acid sequence, 962 residues long: Leucine--tRNA ligase (962 aa).

A 'HIGH' region motif is present at residues P68 to H79. A disordered region spans residues D559 to E582. The segment covering A570–S579 has biased composition (polar residues). A 'KMSKS' region motif is present at residues K733 to S737. Residue K736 participates in ATP binding.

This sequence belongs to the class-I aminoacyl-tRNA synthetase family.

The protein localises to the cytoplasm. It catalyses the reaction tRNA(Leu) + L-leucine + ATP = L-leucyl-tRNA(Leu) + AMP + diphosphate. The protein is Leucine--tRNA ligase of Streptomyces avermitilis (strain ATCC 31267 / DSM 46492 / JCM 5070 / NBRC 14893 / NCIMB 12804 / NRRL 8165 / MA-4680).